The primary structure comprises 599 residues: MRVSRLMLVTLRDVPADAEIASHQLLLRGGYIRRVTSGIYAYLPLMWRVLRKITAIVQEEMDATGALETLLPQLQPAELWRRSGRWQGYTAGEGLMFHLEDRQGRELGLGPTHEEVITSLAGDLLRSYRQLPVTLYQIQSKFRDEIRPRFGLMRGREFIMKDAYSFHACEADLAMTYTAMDEAYQRIFSRCGLETVAVEADSGAIGGASSQEFMVTADAGEDLILISGDGLYAANQEKAVSHPPKAIPLLASKAALLDTPEQGTIETLCTAQGLVPSQVVKVLVMLARIEDGELQPVLVSIRGDQQLNEVKLINALSRELNKGVLDVAPISADQISAQKLEAWPFGAMGPDLDDALLSEATSWTKHFLRLADPTATELNCFVCGANQNNQHRIGMTWSKLGEVPKSVDLRKSQAGDRCIHDSSQILEERRGIEVGHIFQLGRKYSEALEACFTNDKGTQEPFWMGCYGIGISRLAQAAVEQHHDEAGMNWPLAIAPFEVIIVVANIQDEVQQKLAEQLYSELQAADIEVLLDDRNERAGVKFKDADLIGIPWRIVVGRDAAKGQVELIQRSSRKVEILSATQAFTALVQEIAANQNTRV.

Belongs to the class-II aminoacyl-tRNA synthetase family. ProS type 1 subfamily. As to quaternary structure, homodimer.

The protein localises to the cytoplasm. The catalysed reaction is tRNA(Pro) + L-proline + ATP = L-prolyl-tRNA(Pro) + AMP + diphosphate. Catalyzes the attachment of proline to tRNA(Pro) in a two-step reaction: proline is first activated by ATP to form Pro-AMP and then transferred to the acceptor end of tRNA(Pro). As ProRS can inadvertently accommodate and process non-cognate amino acids such as alanine and cysteine, to avoid such errors it has two additional distinct editing activities against alanine. One activity is designated as 'pretransfer' editing and involves the tRNA(Pro)-independent hydrolysis of activated Ala-AMP. The other activity is designated 'posttransfer' editing and involves deacylation of mischarged Ala-tRNA(Pro). The misacylated Cys-tRNA(Pro) is not edited by ProRS. This Prochlorococcus marinus (strain MIT 9303) protein is Proline--tRNA ligase.